The following is an 836-amino-acid chain: TATA box-binding protein-associated factor RNA polymerase I subunit C (836 aa).

2 disordered regions span residues 662-683 and 703-836; these read GDLS…QQDE and HRGE…RMGF. The segment covering 738–754 has biased composition (polar residues); it reads DASSAPRSQDLSTSEAR. A compositionally biased stretch (basic and acidic residues) spans 780-796; the sequence is RQTLRDHTDKLPLKRDT. Residue Thr802 is modified to Phosphothreonine. Positions 803 to 828 are enriched in polar residues; that stretch reads PPSQASSLQTMSFRQQTPVHSGSQPP.

In terms of assembly, component of the transcription factor SL1/TIF-IB complex, composed of TBP and at least TAF1A, TAF1B, TAF1C and TAF1D. In the complex interacts directly with TBP, TAF1A and TAF1B. Interaction of the SL1/TIF-IB subunits with TBP excludes interaction of TBP with the transcription factor IID (TFIID) subunits. Interacts with MYC and RRN3. Interacts with p53/TP53; the interaction prevents the association of SL1/TIF-IB with UBTF and represses RNA polymerase I transcription. Part of Pol I pre-initiation complex (PIC), in which Pol I core assembles with RRN3 and promoter-bound UTBF and SL1/TIF-IB complex.

It localises to the nucleus. The protein localises to the nucleolus. Its function is as follows. Component of the transcription factor SL1/TIF-IB complex, which is involved in the assembly of the PIC (pre-initiation complex) during RNA polymerase I-dependent transcription. The rate of PIC formation probably is primarily dependent on the rate of association of SL1/TIF-IB with the rDNA promoter. SL1/TIF-IB is involved in stabilization of nucleolar transcription factor 1/UBTF on rDNA. Formation of SL1/TIF-IB excludes the association of TBP with TFIID subunits. Recruits RNA polymerase I to the rRNA gene promoter via interaction with RRN3. The polypeptide is TATA box-binding protein-associated factor RNA polymerase I subunit C (Taf1c) (Mus musculus (Mouse)).